Consider the following 395-residue polypeptide: Guanine nucleotide-binding protein subunit beta-5 (395 aa).

WD repeat units follow at residues 103-142 (GHGN…KEHA), 145-184 (MPCT…NENM), 193-234 (MHTN…QSFH), 236-278 (HGAD…QAFE), 279-318 (THES…EVAI), 320-362 (SKES…RVSI), and 365-394 (GHEN…LRVW).

This sequence belongs to the WD repeat G protein beta family. Component of a complex composed of RGS9 (isoform RGS9-1), GNB5 and RGS9BP; within this complex, the presence of GNB5 stabilizes both itself and RGS9 and increases RGS9 GTPase-activating protein (GAP) activity. Interacts with RGS7, forming the RGS7-GNB5 complex; within this complex, the presence of GNB5 increases RGS7 GTPase-activating protein (GAP) activity. Interacts with GPR158; promotes the GTPase activator activity of the RGS7-GNB5 complex in absence of glycine, in contrast GTPase activator activity of the RGS7-GNB5 complex is inhibited in presence of glycine. Interacts with RGS6. In terms of tissue distribution, widely expressed.

The protein resides in the membrane. Functionally, enhances GTPase-activating protein (GAP) activity of regulator of G protein signaling (RGS) proteins, such as RGS7 and RGS9, hence involved in the termination of the signaling initiated by the G protein coupled receptors (GPCRs) by accelerating the GTP hydrolysis on the G-alpha subunits, thereby promoting their inactivation. Increases RGS7 GTPase-activating protein (GAP) activity, thereby regulating mood and cognition. Increases RGS9 GTPase-activating protein (GAP) activity, hence contributes to the deactivation of G protein signaling initiated by D(2) dopamine receptors. May play an important role in neuronal signaling, including in the parasympathetic, but not sympathetic, control of heart rate. In Homo sapiens (Human), this protein is Guanine nucleotide-binding protein subunit beta-5 (GNB5).